A 445-amino-acid chain; its full sequence is ATP synthase subunit b-delta (445 aa).

Residues 1–168 (MSTFIGQLVG…PAAAEVERPV (168 aa)) are ATP synthase subunit b. The chain crosses the membrane as a helical span at residues 4–24 (FIGQLVGFAAIVFLVWRYVVP). The segment at 169-445 (AAKMRSASRR…LTAAEAQLPD (277 aa)) is ATP synthase subunit delta.

The protein in the N-terminal section; belongs to the ATPase B chain family. In the C-terminal section; belongs to the ATPase delta chain family. In terms of assembly, F-type ATPases have 2 components, F(1) - the catalytic core - and F(0) - the membrane proton channel. F(1) has five subunits: alpha(3), beta(3), gamma(1), delta(1), epsilon(1). F(0) has three main subunits: a(1), b(2) and c(10-14). The alpha and beta chains form an alternating ring which encloses part of the gamma chain. F(1) is attached to F(0) by a central stalk formed by the gamma and epsilon chains, while a peripheral stalk is formed by the delta and b chains.

Its subcellular location is the cell membrane. Functionally, f(1)F(0) ATP synthase produces ATP from ADP in the presence of a proton or sodium gradient. F-type ATPases consist of two structural domains, F(1) containing the extramembraneous catalytic core and F(0) containing the membrane proton channel, linked together by a central stalk and a peripheral stalk. During catalysis, ATP synthesis in the catalytic domain of F(1) is coupled via a rotary mechanism of the central stalk subunits to proton translocation. Its function is as follows. This fusion protein includes a component of the F(0) channel (subunit b) and of the F(1) subunit (subunit delta). Two copies of subunit b and one of delta together form the peripheral 'stator' stalk which links F(1) to F(0). This Mycobacterium ulcerans (strain Agy99) protein is ATP synthase subunit b-delta (atpFH).